We begin with the raw amino-acid sequence, 210 residues long: Putative 4-hydroxy-4-methyl-2-oxoglutarate aldolase (210 aa).

Substrate contacts are provided by residues Gly87 to Val90 and Arg109. Asp110 is an a divalent metal cation binding site.

Belongs to the class II aldolase/RraA-like family. Homotrimer. A divalent metal cation serves as cofactor.

The catalysed reaction is 4-hydroxy-4-methyl-2-oxoglutarate = 2 pyruvate. It catalyses the reaction oxaloacetate + H(+) = pyruvate + CO2. In terms of biological role, catalyzes the aldol cleavage of 4-hydroxy-4-methyl-2-oxoglutarate (HMG) into 2 molecules of pyruvate. Also contains a secondary oxaloacetate (OAA) decarboxylase activity due to the common pyruvate enolate transition state formed following C-C bond cleavage in the retro-aldol and decarboxylation reactions. This is Putative 4-hydroxy-4-methyl-2-oxoglutarate aldolase from Halalkalibacterium halodurans (strain ATCC BAA-125 / DSM 18197 / FERM 7344 / JCM 9153 / C-125) (Bacillus halodurans).